Consider the following 342-residue polypeptide: N-acetyl-gamma-glutamyl-phosphate reductase (342 aa).

Residue cysteine 147 is part of the active site.

The protein belongs to the NAGSA dehydrogenase family. Type 1 subfamily.

It localises to the cytoplasm. It carries out the reaction N-acetyl-L-glutamate 5-semialdehyde + phosphate + NADP(+) = N-acetyl-L-glutamyl 5-phosphate + NADPH + H(+). It functions in the pathway amino-acid biosynthesis; L-arginine biosynthesis; N(2)-acetyl-L-ornithine from L-glutamate: step 3/4. Its function is as follows. Catalyzes the NADPH-dependent reduction of N-acetyl-5-glutamyl phosphate to yield N-acetyl-L-glutamate 5-semialdehyde. This is N-acetyl-gamma-glutamyl-phosphate reductase from Campylobacter jejuni subsp. jejuni serotype O:23/36 (strain 81-176).